A 699-amino-acid chain; its full sequence is Mannan-binding lectin serine protease 1 (699 aa).

Residues 1–19 (MRWLLLYYALCFSLSKASA) form the signal peptide. A CUB 1 domain is found at 20–138 (HTVELNNMFG…TGFDAHYMAV (119 aa)). The homodimerization stretch occupies residues 20-184 (HTVELNNMFG…HTDNRTCRVE (165 aa)). The interaction with MBL2 stretch occupies residues 20–184 (HTVELNNMFG…HTDNRTCRVE (165 aa)). The interaction with FCN2 stretch occupies residues 20-278 (HTVELNNMFG…STQSHSVLIL (259 aa)). N-linked (GlcNAc...) asparagine glycosylation is present at asparagine 49. Residues glutamate 68, aspartate 76, aspartate 121, serine 123, aspartate 139, valine 140, and glutamate 142 each contribute to the Ca(2+) site. A disulfide bridge connects residues cysteine 73 and cysteine 91. Positions 139 to 182 (DVDECKEREDEELSCDHYCHNYIGGYYCSCRFGYILHTDNRTCR) constitute an EGF-like; calcium-binding domain. Disulfide bonds link cysteine 143–cysteine 157, cysteine 153–cysteine 166, cysteine 168–cysteine 181, and cysteine 185–cysteine 212. 3 residues coordinate Ca(2+): asparagine 159, tyrosine 160, and glycine 163. Asparagine 159 is modified ((3R)-3-hydroxyasparagine). An N-linked (GlcNAc...) (complex) asparagine glycan is attached at asparagine 178. One can recognise a CUB 2 domain in the interval 185–297 (CSDNLFTQRT…RGWRLSYRAA (113 aa)). Ca(2+) contacts are provided by glutamate 235, aspartate 245, aspartate 282, and serine 284. Cysteine 242 and cysteine 260 are disulfide-bonded. Sushi domains are found at residues 299–364 (NECP…TCKI) and 365–434 (VDCR…TCLP). Disulfide bonds link cysteine 301–cysteine 349, cysteine 329–cysteine 362, cysteine 367–cysteine 414, cysteine 397–cysteine 432, cysteine 436–cysteine 572, and cysteine 475–cysteine 491. The N-linked (GlcNAc...) (complex) asparagine glycan is linked to asparagine 385. A glycan (N-linked (GlcNAc...) asparagine) is linked at asparagine 407. The region spanning 449–696 (IFNGRPAQKG…NKDWIQRVTG (248 aa)) is the Peptidase S1 domain. Histidine 490 acts as the Charge relay system in catalysis. An N-linked (GlcNAc) asparagine glycan is attached at leucine 533. Aspartate 552 functions as the Charge relay system in the catalytic mechanism. A glycan (N-linked (GlcNAc) asparagine) is linked at glutamate 599. Disulfide bonds link cysteine 614–cysteine 631 and cysteine 642–cysteine 672. The active-site Charge relay system is the serine 646.

This sequence belongs to the peptidase S1 family. Homodimer. Interacts with the oligomeric lectins MBL2, FCN2 and FCN3; triggers the lectin pathway of complement through activation of C3. Interacts with SERPING1. Interacts with COLEC11; probably triggers the lectin pathway of complement. In terms of processing, the iron and 2-oxoglutarate dependent 3-hydroxylation of aspartate and asparagine is (R) stereospecific within EGF domains. Post-translationally, N-glycosylated. Some N-linked glycan are of the complex-type. Autoproteolytic processing of the proenzyme produces the active enzyme composed on the heavy and the light chain held together by a disulfide bond. Isoform 1 but not isoform 2 is activated through autoproteolytic processing. As to expression, protein of the plasma which is primarily expressed by liver.

The protein localises to the secreted. Inhibited by SERPING1 and A2M. Functions in the lectin pathway of complement, which performs a key role in innate immunity by recognizing pathogens through patterns of sugar moieties and neutralizing them. The lectin pathway is triggered upon binding of mannan-binding lectin (MBL) and ficolins to sugar moieties which leads to activation of the associated proteases MASP1 and MASP2. Functions as an endopeptidase and may activate MASP2 or C2 or directly activate C3 the key component of complement reaction. Isoform 2 may have an inhibitory effect on the activation of the lectin pathway of complement or may cleave IGFBP5. Also plays a role in development. The chain is Mannan-binding lectin serine protease 1 (MASP1) from Homo sapiens (Human).